The chain runs to 82 residues: Auxin-induced protein 15A (82 aa).

It belongs to the ARG7 family.

This chain is Auxin-induced protein 15A, found in Glycine max (Soybean).